A 508-amino-acid polypeptide reads, in one-letter code: Hydroxymethylglutaryl-CoA synthase, mitochondrial (508 aa).

A mitochondrion-targeting transit peptide spans 1 to 37 (MQRLLTPVRQVLQVKRVMQEASLLPARLLPAAHPSFS). Lysine 52 is modified (N6-succinyllysine). Glutamate 80 and alanine 81 together coordinate (3S)-3-hydroxy-3-methylglutaryl-CoA. Glutamate 132 acts as the Proton donor/acceptor in catalysis. Residues cysteine 166, asparagine 204, and threonine 208 each coordinate (3S)-3-hydroxy-3-methylglutaryl-CoA. Cysteine 166 serves as the catalytic Acyl-thioester intermediate. Lysine 243 bears the N6-acetyllysine mark. Lysine 256 carries the N6-acetyllysine; alternate modification. Lysine 256 carries the post-translational modification N6-succinyllysine; alternate. 2 residues coordinate (3S)-3-hydroxy-3-methylglutaryl-CoA: serine 258 and histidine 301. The Proton donor/acceptor role is filled by histidine 301. Residue lysine 306 is modified to N6-acetyllysine. (3S)-3-hydroxy-3-methylglutaryl-CoA is bound at residue lysine 310. Lysine 310 is modified (N6-acetyllysine; alternate). N6-succinyllysine; alternate is present on lysine 310. N6-succinyllysine is present on lysine 333. An N6-acetyllysine; alternate mark is found at lysine 342, lysine 350, lysine 354, and lysine 358. Lysine 342, lysine 350, lysine 354, and lysine 358 each carry N6-succinyllysine; alternate. Residues asparagine 380 and serine 414 each coordinate (3S)-3-hydroxy-3-methylglutaryl-CoA. A Phosphoserine modification is found at serine 433. Lysine 437 carries the N6-acetyllysine modification. Serine 440 is modified (phosphoserine). Lysine 447 bears the N6-acetyllysine; alternate mark. The residue at position 447 (lysine 447) is an N6-succinyllysine; alternate. The residue at position 456 (serine 456) is a Phosphoserine. The residue at position 473 (lysine 473) is an N6-acetyllysine; alternate. Lysine 473 carries the post-translational modification N6-succinyllysine; alternate. Serine 477 carries the phosphoserine modification.

The protein belongs to the thiolase-like superfamily. HMG-CoA synthase family. Homodimer. In terms of processing, succinylated. Desuccinylated by SIRT5. Succinylation, at least at Lys-310, inhibits the enzymatic activity.

The protein localises to the mitochondrion. It catalyses the reaction acetoacetyl-CoA + acetyl-CoA + H2O = (3S)-3-hydroxy-3-methylglutaryl-CoA + CoA + H(+). The protein operates within metabolic intermediate biosynthesis; (R)-mevalonate biosynthesis; (R)-mevalonate from acetyl-CoA: step 2/3. Functionally, catalyzes the first irreversible step in ketogenesis, condensing acetyl-CoA to acetoacetyl-CoA to form HMG-CoA, which is converted by HMG-CoA reductase (HMGCR) into mevalonate. The chain is Hydroxymethylglutaryl-CoA synthase, mitochondrial (HMGCS2) from Bos taurus (Bovine).